The sequence spans 134 residues: Large ribosomal subunit protein eL32 (134 aa).

This sequence belongs to the eukaryotic ribosomal protein eL32 family.

The polypeptide is Large ribosomal subunit protein eL32 (RpL32) (Drosophila affinis (Fruit fly)).